A 605-amino-acid polypeptide reads, in one-letter code: Protein Spindly (605 aa).

Met1 bears the N-acetylmethionine mark. The stretch at 3–442 (TDIVINLRCK…ELKLKYEPEE (440 aa)) forms a coiled coil. A phosphoserine mark is found at Ser513, Ser515, and Ser555. The disordered stretch occupies residues 545–581 (LSERSGNTLNSPRLAAESKLQTEVKEGKETASKLEKE). Residues 564–581 (LQTEVKEGKETASKLEKE) show a composition bias toward basic and acidic residues.

This sequence belongs to the Spindly family. Interacts with KNTC1 and ZW10. These interactions appear weak and may be transient or indirect. Interacts with dynein intermediate chain and dynactin (DCTN1). Interacts with the catalytically active form of USP45. Monoubiquitinated with'Lys-48' linkage. Deubiquitinated by USP45.

Its subcellular location is the cytoplasm. It localises to the cytoskeleton. It is found in the microtubule organizing center. The protein resides in the centrosome. The protein localises to the chromosome. Its subcellular location is the centromere. It localises to the kinetochore. It is found in the nucleus. The protein resides in the spindle pole. Functionally, required for the localization of dynein and dynactin to the mitotic kintochore. Dynein is believed to control the initial lateral interaction between the kinetochore and spindle microtubules and to facilitate the subsequent formation of end-on kinetochore-microtubule attachments mediated by the NDC80 complex. Also required for correct spindle orientation. Does not appear to be required for the removal of spindle assembly checkpoint (SAC) proteins from the kinetochore upon bipolar spindle attachment. Acts as an adapter protein linking the dynein motor complex to various cargos and converts dynein from a non-processive to a highly processive motor in the presence of dynactin. Facilitates the interaction between dynein and dynactin and activates dynein processivity (the ability to move along a microtubule for a long distance without falling off the track). Plays a role in cell migration. This chain is Protein Spindly, found in Macaca fascicularis (Crab-eating macaque).